The chain runs to 70 residues: Small ribosomal subunit protein eS17 (70 aa).

It belongs to the eukaryotic ribosomal protein eS17 family.

This chain is Small ribosomal subunit protein eS17, found in Methanopyrus kandleri (strain AV19 / DSM 6324 / JCM 9639 / NBRC 100938).